Consider the following 207-residue polypeptide: Galactoside O-acetyltransferase (207 aa).

N87 provides a ligand contact to acetyl-CoA. The active-site Proton donor/acceptor is the H117. Residues A144, A162, 167–168 (TK), and R185 each bind acetyl-CoA.

The protein belongs to the transferase hexapeptide repeat family. As to quaternary structure, homotrimer.

Its subcellular location is the cytoplasm. It carries out the reaction a beta-D-galactoside + acetyl-CoA = a 6-acetyl-beta-D-galactoside + CoA. This Lactococcus lactis subsp. lactis (strain IL1403) (Streptococcus lactis) protein is Galactoside O-acetyltransferase (lacA).